Here is a 97-residue protein sequence, read N- to C-terminus: Co-chaperonin GroES (97 aa).

Belongs to the GroES chaperonin family. In terms of assembly, heptamer of 7 subunits arranged in a ring. Interacts with the chaperonin GroEL.

Its subcellular location is the cytoplasm. Functionally, together with the chaperonin GroEL, plays an essential role in assisting protein folding. The GroEL-GroES system forms a nano-cage that allows encapsulation of the non-native substrate proteins and provides a physical environment optimized to promote and accelerate protein folding. GroES binds to the apical surface of the GroEL ring, thereby capping the opening of the GroEL channel. The protein is Co-chaperonin GroES of Pseudomonas putida (strain W619).